A 440-amino-acid polypeptide reads, in one-letter code: Indoleamine 2,3-dioxygenase qulI (440 aa).

Histidine 347 provides a ligand contact to heme.

Belongs to the indoleamine 2,3-dioxygenase family. In terms of assembly, monomer. Requires heme as cofactor.

The catalysed reaction is D-tryptophan + O2 = N-formyl-D-kynurenine. It carries out the reaction L-tryptophan + O2 = N-formyl-L-kynurenine. It functions in the pathway secondary metabolite biosynthesis. Functionally, indoleamine 2,3-dioxygenase; part of the gene cluster that mediates the biosynthesis of quinolactacin A2 (QUL A2), a fungal alkaloid that features a quinolone-gamma-lactam hybrid, which is a potential pharmacophore for the treatment of cancer and Alzheimer's disease. The quinolone-gamma-lactam hybrid scaffold is synthesized from the combination of L-isoleucine (L-Ile) and the nonproteinogenic amino acid L-kynurenine, followed by quinolone cyclization, oxidative decarboxylation, and lactam formation. Additionally, the N-methyl group is derived from methionine, which might be catalyzed by an S-adenosylmethionine (SAM)-dependent methyltransferase. Bioconversion of L-tryptophan to L-kynurenine could be catalyzed by the indoleamine-2,3-dioxygenase (IDO) qulI to produce an unstable product, N-formyl-L-kynurenine, followed by kynurenine formamidase catalyzed hydrolysis. QulM then acts as a methyltransferase that methylates L-kynurenine at the N-4 position. The FMN-dependent alpha-hydroxy acid dehydrogenase qulF than functions as an oxidative decarboxylase which converts N-methylkynurenine into 2-aminobenzoylacetamide via 2 tandem reactions, including dehydrogenation and decarboxylation. An amidase located outside of the qul gene cluster further produces the unstable beta-keto acid precursor N-methyl-2-aminobenzoylacetate, which could be spontaneously dehydrated to form N-methyl-4-hydroxy-2-quinolone. The NRPS qulB is able to incorporate N-methyl-2-aminobenzoylacetate and efficiently compete with the spontaneous reaction. By further extending the beta-keto acid with L-Ile, qulA performs a Dieckmann condensation to form the gamma-lactam ring and release a 4-ketopyrrolidinone intermediate from the assembly line. This intermediate could plausibly further undergo a spontaneous cyclization to yield the final quinolone-gamma-lactam hybrid structure. The polypeptide is Indoleamine 2,3-dioxygenase qulI (Penicillium citrinum).